The chain runs to 360 residues: DNA replication and repair protein RecF (360 aa).

Position 30 to 37 (30 to 37 (GHNGSGKT)) interacts with ATP.

Belongs to the RecF family.

It localises to the cytoplasm. Its function is as follows. The RecF protein is involved in DNA metabolism; it is required for DNA replication and normal SOS inducibility. RecF binds preferentially to single-stranded, linear DNA. It also seems to bind ATP. The protein is DNA replication and repair protein RecF of Actinobacillus pleuropneumoniae serotype 7 (strain AP76).